The chain runs to 914 residues: Alanine--tRNA ligase (914 aa).

The Zn(2+) site is built by H613, H617, C717, and H721.

This sequence belongs to the class-II aminoacyl-tRNA synthetase family. The cofactor is Zn(2+).

The protein resides in the cytoplasm. It carries out the reaction tRNA(Ala) + L-alanine + ATP = L-alanyl-tRNA(Ala) + AMP + diphosphate. In terms of biological role, catalyzes the attachment of alanine to tRNA(Ala) in a two-step reaction: alanine is first activated by ATP to form Ala-AMP and then transferred to the acceptor end of tRNA(Ala). Also edits incorrectly charged Ser-tRNA(Ala) and Gly-tRNA(Ala) via its editing domain. This Pyrococcus abyssi (strain GE5 / Orsay) protein is Alanine--tRNA ligase.